The chain runs to 337 residues: Anthranilate phosphoribosyltransferase (337 aa).

5-phospho-alpha-D-ribose 1-diphosphate is bound by residues glycine 81, 84–85 (GD), serine 89, 91–94 (NVST), 109–117 (KHGNRALSS), and alanine 121. An anthranilate-binding site is contributed by glycine 81. Position 93 (serine 93) interacts with Mg(2+). Asparagine 112 lines the anthranilate pocket. Position 167 (arginine 167) interacts with anthranilate. Mg(2+) contacts are provided by aspartate 226 and glutamate 227.

The protein belongs to the anthranilate phosphoribosyltransferase family. In terms of assembly, homodimer. It depends on Mg(2+) as a cofactor.

The catalysed reaction is N-(5-phospho-beta-D-ribosyl)anthranilate + diphosphate = 5-phospho-alpha-D-ribose 1-diphosphate + anthranilate. It participates in amino-acid biosynthesis; L-tryptophan biosynthesis; L-tryptophan from chorismate: step 2/5. Its function is as follows. Catalyzes the transfer of the phosphoribosyl group of 5-phosphorylribose-1-pyrophosphate (PRPP) to anthranilate to yield N-(5'-phosphoribosyl)-anthranilate (PRA). This chain is Anthranilate phosphoribosyltransferase, found in Bradyrhizobium sp. (strain ORS 278).